Reading from the N-terminus, the 156-residue chain is LIM domain only protein 3 (156 aa).

2 consecutive LIM zinc-binding domains span residues 22–84 (KGCA…LFGV) and 86–148 (GNCA…GLMK).

This is LIM domain only protein 3 from Xenopus laevis (African clawed frog).